Consider the following 165-residue polypeptide: Destrin (165 aa).

Alanine 2 is modified (N-acetylalanine). Residue serine 3 is modified to Phosphoserine. The ADF-H domain maps to 4-153 (GVQVADEVCR…NRACIAEKLG (150 aa)). Lysine 19 is modified (N6-acetyllysine). The short motif at 30–34 (KKRKK) is the Nuclear localization signal element.

The protein belongs to the actin-binding proteins ADF family. In terms of processing, ISGylated.

Functionally, actin-depolymerizing protein. Severs actin filaments (F-actin) and binds to actin monomers (G-actin). Acts in a pH-independent manner. The protein is Destrin (DSTN) of Bos taurus (Bovine).